The chain runs to 160 residues: SsrA-binding protein (160 aa).

Belongs to the SmpB family.

It is found in the cytoplasm. Functionally, required for rescue of stalled ribosomes mediated by trans-translation. Binds to transfer-messenger RNA (tmRNA), required for stable association of tmRNA with ribosomes. tmRNA and SmpB together mimic tRNA shape, replacing the anticodon stem-loop with SmpB. tmRNA is encoded by the ssrA gene; the 2 termini fold to resemble tRNA(Ala) and it encodes a 'tag peptide', a short internal open reading frame. During trans-translation Ala-aminoacylated tmRNA acts like a tRNA, entering the A-site of stalled ribosomes, displacing the stalled mRNA. The ribosome then switches to translate the ORF on the tmRNA; the nascent peptide is terminated with the 'tag peptide' encoded by the tmRNA and targeted for degradation. The ribosome is freed to recommence translation, which seems to be the essential function of trans-translation. This chain is SsrA-binding protein, found in Salmonella agona (strain SL483).